The following is a 451-amino-acid chain: Target of rapamycin complex 1 subunit tco89 (451 aa).

The segment at 1–35 is disordered; it reads MERPSLSRRTSSSTVSTDGEGVYSRSTKERKRNFI. Low complexity predominate over residues 7–17; the sequence is SRRTSSSTVST. Phosphoserine is present on Ser-70. 3 disordered regions span residues 122 to 164, 176 to 264, and 362 to 437; these read WDDA…PVTR, INSN…GNSL, and NQNF…DTDY. Positions 129 to 162 are enriched in polar residues; that stretch reads NDSTAGNLDSDSALPTPSVTTNEAADSSRASSPV. Low complexity predominate over residues 203–215; that stretch reads DDSAADASTTKSS. 3 stretches are compositionally biased toward polar residues: residues 228–242, 362–376, and 407–417; these read HSNNREVTQATNQPK, NQNFDSQNAFNTSAA, and QSASLNASMSA. The segment covering 419-430 has biased composition (basic residues); sequence SHARQRSIHVPK.

The protein belongs to the TORC subunit TCO89 family. The target of rapamycin complex 1 (TORC1) is composed of at least mip1, pop3/wat1, tco89, toc1 and tor2. Post-translationally, either Thr-10, Ser-11, Ser-12, Ser-13 or Thr-14 and Ser-214 or Ser-215 and Ser-247 or Ser-249 are phosphorylated as well.

The protein localises to the cytoplasm. Its function is as follows. Component of TORC1, which regulates multiple cellular processes to control cell growth in response to environmental signals. Tor2 is essential for growth. Nutrient limitation and environmental stress signals cause inactivation of TORC1. Active TORC1 positively controls cell growth and ribosome biogenesis by regulating ribosomal protein gene expression. TORC1 negatively controls G1 cell-cycle arrest, sexual development and amino acid uptake. Represses mating, meiosis and sporulation efficiency by interfering with the functions of the transcription factor ste11 and the meiosis-promoting RNA-binding protein mei2. The chain is Target of rapamycin complex 1 subunit tco89 from Schizosaccharomyces pombe (strain 972 / ATCC 24843) (Fission yeast).